The sequence spans 397 residues: tRNA-specific 2-thiouridylase MnmA (397 aa).

ATP is bound by residues 19 to 26 (AMSGGVDS) and Leu45. Residue Cys113 is the Nucleophile of the active site. A disulfide bridge links Cys113 with Cys210. An ATP-binding site is contributed by Gly137. An interaction with tRNA region spans residues 160–162 (RDQ). Cys210 acts as the Cysteine persulfide intermediate in catalysis.

The protein belongs to the MnmA/TRMU family.

It is found in the cytoplasm. The enzyme catalyses S-sulfanyl-L-cysteinyl-[protein] + uridine(34) in tRNA + AH2 + ATP = 2-thiouridine(34) in tRNA + L-cysteinyl-[protein] + A + AMP + diphosphate + H(+). Catalyzes the 2-thiolation of uridine at the wobble position (U34) of tRNA, leading to the formation of s(2)U34. This Bradyrhizobium sp. (strain ORS 278) protein is tRNA-specific 2-thiouridylase MnmA.